Consider the following 543-residue polypeptide: Alanine aminotransferase 1, mitochondrial (543 aa).

A mitochondrion-targeting transit peptide spans methionine 1–methionine 55. Positions serine 43–serine 63 are enriched in low complexity. Positions serine 43–leucine 64 are disordered. Serine 56 is modified (N-acetylserine). Pyridoxal 5'-phosphate is bound by residues tyrosine 173, alanine 209 to serine 210, tyrosine 235, asparagine 291, tyrosine 322, and serine 354 to glutamine 356. N6-(pyridoxal phosphate)lysine is present on lysine 360. Residues arginine 369 and asparagine 397 each contribute to the pyridoxal 5'-phosphate site.

It belongs to the class-I pyridoxal-phosphate-dependent aminotransferase family. Alanine aminotransferase subfamily. As to quaternary structure, homodimer. Pyridoxal 5'-phosphate is required as a cofactor. The N-terminus is blocked. As to expression, mostly expressed in roots and shoots, mostly in vascular tissues, and, to a lower extent, in flowers and leaves.

The protein localises to the mitochondrion. It catalyses the reaction L-alanine + 2-oxoglutarate = pyruvate + L-glutamate. Its pathway is photosynthesis; C4 acid pathway. It functions in the pathway amino-acid degradation; L-alanine degradation via transaminase pathway; pyruvate from L-alanine: step 1/1. Is the major alanine aminotransferase in roots that catalyzes the conversion of alanine to pyruvate. Involved in the rapid conversion of alanine to pyruvate during recovery from low-oxygen stress. This is Alanine aminotransferase 1, mitochondrial from Arabidopsis thaliana (Mouse-ear cress).